A 250-amino-acid chain; its full sequence is Electron transfer flavoprotein subunit beta (250 aa).

Belongs to the ETF beta-subunit/FixA family. As to quaternary structure, heterodimer of an alpha and a beta subunit. It depends on FAD as a cofactor. AMP is required as a cofactor.

It is found in the mitochondrion matrix. Functionally, the electron transfer flavoprotein serves as a specific electron acceptor for several dehydrogenases, including five acyl-CoA dehydrogenases, glutaryl-CoA and sarcosine dehydrogenase. It transfers the electrons to the main mitochondrial respiratory chain via ETF-ubiquinone oxidoreductase (ETF dehydrogenase). The chain is Electron transfer flavoprotein subunit beta (etfb) from Dictyostelium discoideum (Social amoeba).